A 632-amino-acid chain; its full sequence is Putative golgin subfamily A member 8I (632 aa).

The segment at 1–77 (MAEETQHNKL…SSATLKDLES (77 aa)) is disordered. Over residues 38–50 (TNGSIPQTATSGG) the composition is skewed to polar residues. Coiled coils occupy residues 86-154 (LDSR…HMKR) and 209-421 (KLEQ…SLMA). Positions 352–362 (KQEERIQEQHK) are enriched in basic and acidic residues. Disordered regions lie at residues 352-383 (KQEE…ENKS), 423-445 (PGEG…PMPS), 496-524 (LSEP…DEGE), and 550-569 (AHNP…ELGA). The span at 508–520 (LGGGHHQAGAQGG) shows a compositional bias: gly residues. The golgi-targeting domain stretch occupies residues 529–632 (AADGIAAYSN…CWAWLPRRRR (104 aa)). The span at 555-568 (DEPGPGAPAPQELG) shows a compositional bias: low complexity.

Belongs to the GOLGA8 family.

Its subcellular location is the golgi apparatus. It localises to the golgi stack membrane. Its function is as follows. May be involved in maintaining Golgi structure. The protein is Putative golgin subfamily A member 8I of Homo sapiens (Human).